Here is a 443-residue protein sequence, read N- to C-terminus: sn-2 acyl-lipid omega-3 desaturase (ferredoxin), chloroplastic (443 aa).

Residues 1–51 constitute a chloroplast transit peptide; sequence MAGLVLSGCAIKPFSQSLPIPTKRFITNPSNINLLHPKDPIFSPNFHGFSR. 2 helical membrane-spanning segments follow: residues 120-140 and 143-163; these read MSYVVRDVAIVLGLAAAAAHL and WLVWPLYWAAQGTMFWALFVL. The Histidine box-1 motif lies at 165–169; it reads HDCGH. Positions 201–205 match the Histidine box-2 motif; the sequence is HRTHH. The next 2 membrane-spanning stretches (helical) occupy residues 281 to 301 and 304 to 324; these read TICWTTMLALLFGLNFVVGPV and LKLYGIPYLINVMWLDFVTYL. Positions 368-372 match the Histidine box-3 motif; that stretch reads HVIHH.

Belongs to the fatty acid desaturase type 1 family. In terms of tissue distribution, highly expressed in leaves and cotyledons, while no or little expression detected in mature seeds, roots and stems.

The protein localises to the plastid. It is found in the chloroplast membrane. The enzyme catalyses a (7Z,10Z)-hexadecadienoyl-containing glycerolipid + 2 reduced [2Fe-2S]-[ferredoxin] + O2 + 2 H(+) = a (7Z,10Z,13Z)-hexadecatrienoyl-containing glycerolipid + 2 oxidized [2Fe-2S]-[ferredoxin] + 2 H2O. It carries out the reaction a (9Z,12Z)-octadecadienoyl-containing glycerolipid + 2 reduced [2Fe-2S]-[ferredoxin] + O2 + 2 H(+) = (9Z,12Z,15Z)-octadecatrienoyl-containing glycerolipid + 2 oxidized [2Fe-2S]-[ferredoxin] + 2 H2O. Its pathway is lipid metabolism; polyunsaturated fatty acid biosynthesis. Functionally, chloroplast omega-3 fatty acid desaturase introduces the third double bond in the biosynthesis of 18:3, and probably also 16:3 fatty acids, important constituents of plant membranes. It is thought to use ferredoxin as an electron donor and to act on fatty acids esterified to galactolipids, sulfolipids and phosphatidylglycerol. This chain is sn-2 acyl-lipid omega-3 desaturase (ferredoxin), chloroplastic, found in Helianthus annuus (Common sunflower).